A 461-amino-acid chain; its full sequence is Mitochondrial distribution and morphology protein 12 (461 aa).

An SMP-LTD domain is found at 1–454 (MSLDLDWNLL…YPNYYTIDLP (454 aa)). Disordered regions lie at residues 75 to 104 (RRRG…VHHG) and 226 to 301 (DASS…PSSA). Composition is skewed to polar residues over residues 80 to 97 (RQTT…SPTD) and 272 to 288 (RATS…QNSP).

Belongs to the MDM12 family. Component of the ER-mitochondria encounter structure (ERMES) or MDM complex, composed of MMM1, MDM10, MDM12 and MDM34. An MMM1 homodimer associates with one molecule of MDM12 on each side in a pairwise head-to-tail manner, and the SMP-LTD domains of MMM1 and MDM12 generate a continuous hydrophobic tunnel for phospholipid trafficking.

Its subcellular location is the mitochondrion outer membrane. The protein localises to the endoplasmic reticulum membrane. In terms of biological role, component of the ERMES/MDM complex, which serves as a molecular tether to connect the endoplasmic reticulum (ER) and mitochondria. Components of this complex are involved in the control of mitochondrial shape and protein biogenesis, and function in nonvesicular lipid trafficking between the ER and mitochondria. MDM12 is required for the interaction of the ER-resident membrane protein MMM1 and the outer mitochondrial membrane-resident beta-barrel protein MDM10. The MDM12-MMM1 subcomplex functions in the major beta-barrel assembly pathway that is responsible for biogenesis of all mitochondrial outer membrane beta-barrel proteins, and acts in a late step after the SAM complex. The MDM10-MDM12-MMM1 subcomplex further acts in the TOM40-specific pathway after the action of the MDM12-MMM1 complex. Essential for establishing and maintaining the structure of mitochondria and maintenance of mtDNA nucleoids. The chain is Mitochondrial distribution and morphology protein 12 from Mycosarcoma maydis (Corn smut fungus).